Here is a 352-residue protein sequence, read N- to C-terminus: Molybdenum import ATP-binding protein ModC (352 aa).

An ABC transporter domain is found at 1 to 229 (MLELNFSQTL…SVMHPWLPKE (229 aa)). 31–38 (GVSGAGKT) provides a ligand contact to ATP. The Mop domain occupies 289–352 (QTSIRNVLRA…AQVKSVSITA (64 aa)).

It belongs to the ABC transporter superfamily. Molybdate importer (TC 3.A.1.8) family. As to quaternary structure, the complex is composed of two ATP-binding proteins (ModC), two transmembrane proteins (ModB) and a solute-binding protein (ModA).

The protein resides in the cell inner membrane. The catalysed reaction is molybdate(out) + ATP + H2O = molybdate(in) + ADP + phosphate + H(+). Its function is as follows. Part of the ABC transporter complex ModABC involved in molybdenum import. Responsible for energy coupling to the transport system. The protein is Molybdenum import ATP-binding protein ModC of Salmonella typhi.